The primary structure comprises 341 residues: Anthranilate phosphoribosyltransferase (341 aa).

Residues G83, 86 to 87 (GD), T91, 93 to 96 (NIST), 111 to 119 (KHGNRGVSS), and S123 contribute to the 5-phospho-alpha-D-ribose 1-diphosphate site. G83 is a binding site for anthranilate. S95 lines the Mg(2+) pocket. Residue N114 participates in anthranilate binding. R169 provides a ligand contact to anthranilate. 2 residues coordinate Mg(2+): D228 and E229.

It belongs to the anthranilate phosphoribosyltransferase family. In terms of assembly, homodimer. Mg(2+) is required as a cofactor.

It carries out the reaction N-(5-phospho-beta-D-ribosyl)anthranilate + diphosphate = 5-phospho-alpha-D-ribose 1-diphosphate + anthranilate. Its pathway is amino-acid biosynthesis; L-tryptophan biosynthesis; L-tryptophan from chorismate: step 2/5. Catalyzes the transfer of the phosphoribosyl group of 5-phosphorylribose-1-pyrophosphate (PRPP) to anthranilate to yield N-(5'-phosphoribosyl)-anthranilate (PRA). This Cupriavidus necator (strain ATCC 17699 / DSM 428 / KCTC 22496 / NCIMB 10442 / H16 / Stanier 337) (Ralstonia eutropha) protein is Anthranilate phosphoribosyltransferase.